A 140-amino-acid chain; its full sequence is Ctenidin-1 (140 aa).

Residues 1-19 (MKHLIPLIVMASVVLAVYA) form the signal peptide. At glycine 138 the chain carries Glycine amide.

The protein belongs to the glycine-rich peptide family. As to expression, expressed in hemocytes (at protein level).

It localises to the secreted. In terms of biological role, antimicrobial protein with bacteriostatic activity against the Gram-negative bacterium E.coli, and very weak activity against the Gram-positive bacterium S.aureus. Lacks activity against the yeast C.albicans. The chain is Ctenidin-1 from Cupiennius salei (American wandering spider).